The chain runs to 460 residues: Exodeoxyribonuclease 7 large subunit (460 aa).

It belongs to the XseA family. Heterooligomer composed of large and small subunits.

It is found in the cytoplasm. The enzyme catalyses Exonucleolytic cleavage in either 5'- to 3'- or 3'- to 5'-direction to yield nucleoside 5'-phosphates.. Its function is as follows. Bidirectionally degrades single-stranded DNA into large acid-insoluble oligonucleotides, which are then degraded further into small acid-soluble oligonucleotides. The sequence is that of Exodeoxyribonuclease 7 large subunit from Edwardsiella ictaluri (strain 93-146).